The sequence spans 339 residues: Phenylalanine--tRNA ligase alpha subunit (339 aa).

E247 is a binding site for Mg(2+).

Belongs to the class-II aminoacyl-tRNA synthetase family. Phe-tRNA synthetase alpha subunit type 1 subfamily. Tetramer of two alpha and two beta subunits. Mg(2+) is required as a cofactor.

Its subcellular location is the cytoplasm. It catalyses the reaction tRNA(Phe) + L-phenylalanine + ATP = L-phenylalanyl-tRNA(Phe) + AMP + diphosphate + H(+). The protein is Phenylalanine--tRNA ligase alpha subunit (pheS) of Deinococcus radiodurans (strain ATCC 13939 / DSM 20539 / JCM 16871 / CCUG 27074 / LMG 4051 / NBRC 15346 / NCIMB 9279 / VKM B-1422 / R1).